The primary structure comprises 250 residues: Thioesterase FPSE_09186 (250 aa).

Belongs to the AMT4 thioesterase family.

Its pathway is secondary metabolite biosynthesis. Its function is as follows. Thioesterase; part of the gene cluster that mediates the biosynthesis of the lipopeptides W493 A and B. W493 A and B consist of six amino acid residues D-allo-thr, L-Ala, D-Ala, L-Gln, D-Tyr, and L-Val/L-Ile linked to a 3-hydroxy-4-methyltetradecanoic acid polyketide chain. The biosynthesis starts with formation of the linear polyketide chain by the highly reducing polyketide synthase PKS40. The gene cluster contains a putative acyl-CoA ligase (FPSE_09184) for formation of a CoA thioester polyketide. The thiol bond could be hydrolyzed by the putative thioesterase (FPSE_09186) and then accepted by the first T domain in module 1 of NRPS32. The second T domain is responsible for accepting a threonine, which is adenylated by the A domain and epimerized to the D-allo-threonine formed by the E domain. The five successive modules incorporate Ala, Ala, Gln, Tyr, and Val/Ile into the final product, which is released by cyclization. The polypeptide is Thioesterase FPSE_09186 (Fusarium pseudograminearum (strain CS3096) (Wheat and barley crown-rot fungus)).